The primary structure comprises 413 residues: NPL4-like protein 2 (413 aa).

S104 carries the phosphoserine modification. The MPN domain maps to 131-272; sequence SVSFDRDAAN…ADVHFEAFQM (142 aa).

This sequence belongs to the NPL4 family.

The protein operates within protein degradation; proteasomal ubiquitin-dependent pathway. Functionally, may be part of a complex that binds ubiquitinated proteins and that is necessary for the export of misfolded proteins from the ER to the cytoplasm, where they are degraded by the proteasome. This chain is NPL4-like protein 2, found in Arabidopsis thaliana (Mouse-ear cress).